The following is a 1271-amino-acid chain: SR-related and CTD-associated factor 8 (1271 aa).

The CID domain occupies 1-139 (MEAVKTFNSE…PLLDMAAGIP (139 aa)). Threonine 6 is subject to Phosphothreonine. A Glycyl lysine isopeptide (Lys-Gly) (interchain with G-Cter in SUMO1) cross-link involves residue lysine 18. Basic and acidic residues predominate over residues 270–283 (GEDSEHSEEPKKEI). Disordered regions lie at residues 270–289 (GEDS…SQLS), 322–354 (QQQP…SQQH), and 384–468 (EEVF…PPIR). Serine 273 carries the phosphoserine modification. The segment covering 327-354 (KATPQDSQEGTFGSEHSASPSQGSSQQH) has biased composition (polar residues). A compositionally biased stretch (basic residues) spans 394 to 443 (VAVRSRSRTHSRSRSRSPRKRRSRSRSGSRKRKHRKRSRSRSRERKRKSS). A compositionally biased stretch (basic and acidic residues) spans 447-461 (SSERRAREREKERQK). Residues 477–551 (TTLWVGQVDK…KVIKIAWALN (75 aa)) form the RRM domain. Position 615 is a phosphothreonine (threonine 615). Phosphoserine is present on residues serine 617 and serine 779. Residues 899–918 (TQPPAGPQNLPPLSIPNQRM) are disordered. Residues 902–912 (PAGPQNLPPLS) show a composition bias toward pro residues. 3 positions are modified to asymmetric dimethylarginine: arginine 917, arginine 927, and arginine 938. Composition is skewed to pro residues over residues 945-956 (GIPPQRGIPPPS) and 963-972 (HPPPRGPFPP). Positions 945–1064 (GIPPQRGIPP…DGRDHFGRPP (120 aa)) are disordered. Basic and acidic residues-rich tracts occupy residues 1011-1027 (EGDR…RESI) and 1034-1064 (DVRD…GRPP). Position 1073 is an asymmetric dimethylarginine (arginine 1073). The segment at 1198 to 1271 (YFEGATSQRK…VVESTETEGT (74 aa)) is disordered. Residues 1255–1271 (ADIESEPVVESTETEGT) show a composition bias toward acidic residues.

In terms of assembly, interacts with POLR2A; via C-terminal heptapeptide repeat domain (CTD) phosphorylated at 'Ser-2' and 'Ser-5'. Identified in a complex with CDC5L and other spliceosomal proteins.

It localises to the nucleus. Its subcellular location is the nucleus matrix. Its function is as follows. Anti-terminator protein required to prevent early mRNA termination during transcription. Together with SCAF4, acts by suppressing the use of early, alternative poly(A) sites, thereby preventing the accumulation of non-functional truncated proteins. Mechanistically, associates with the phosphorylated C-terminal heptapeptide repeat domain (CTD) of the largest RNA polymerase II subunit (POLR2A), and subsequently binds nascent RNA upstream of early polyadenylation sites to prevent premature mRNA transcript cleavage and polyadenylation. Independently of SCAF4, also acts as a positive regulator of transcript elongation. This is SR-related and CTD-associated factor 8 from Homo sapiens (Human).